The chain runs to 441 residues: Glutamyl-tRNA reductase (441 aa).

Substrate contacts are provided by residues Thr47–Arg50, Ser104, Glu109–Gln111, and Gln115. Cys48 functions as the Nucleophile in the catalytic mechanism. Gly184–Gly189 provides a ligand contact to NADP(+).

It belongs to the glutamyl-tRNA reductase family. In terms of assembly, homodimer.

It carries out the reaction (S)-4-amino-5-oxopentanoate + tRNA(Glu) + NADP(+) = L-glutamyl-tRNA(Glu) + NADPH + H(+). Its pathway is porphyrin-containing compound metabolism; protoporphyrin-IX biosynthesis; 5-aminolevulinate from L-glutamyl-tRNA(Glu): step 1/2. In terms of biological role, catalyzes the NADPH-dependent reduction of glutamyl-tRNA(Glu) to glutamate 1-semialdehyde (GSA). The protein is Glutamyl-tRNA reductase of Myxococcus xanthus (strain DK1622).